The chain runs to 440 residues: uncharacterized protein (440 aa).

Residues 1–17 form the signal peptide; the sequence is MDRFFCTVWVWSVLFGA. The N-palmitoyl cysteine moiety is linked to residue cysteine 18. Residue cysteine 18 is the site of S-diacylglycerol cysteine attachment. The segment at 241-268 is disordered; that stretch reads SALQERPSSPEPVVSTIPSPEGEENSAA.

The protein localises to the cell membrane. This is an uncharacterized protein from Treponema pallidum (strain Nichols).